The sequence spans 451 residues: Protoheme IX farnesyltransferase, mitochondrial (451 aa).

Transmembrane regions (helical) follow at residues 149 to 169 (TILV…PATV), 240 to 260 (PTVA…YTSL), 265 to 285 (IINT…GWAA), 289 to 309 (LTHP…FPHF), 339 to 359 (VALR…YFNI), and 414 to 434 (KAFF…ILHK).

Belongs to the UbiA prenyltransferase family.

The protein resides in the mitochondrion membrane. Converts protoheme IX and farnesyl diphosphate to heme O. This chain is Protoheme IX farnesyltransferase, mitochondrial (COX10), found in Candida glabrata (strain ATCC 2001 / BCRC 20586 / JCM 3761 / NBRC 0622 / NRRL Y-65 / CBS 138) (Yeast).